The chain runs to 464 residues: Opioid growth factor receptor-like protein 1 (464 aa).

Disordered regions lie at residues 1–91 (MGNL…AKPK) and 309–464 (ENFI…TSSG). Residues 43-59 (QQHDEPEQPKQPPERAG) are compositionally biased toward basic and acidic residues. Over residues 74-86 (AAGAEQGGESTEG) the composition is skewed to low complexity. The segment covering 316 to 325 (PKKELPERSK) has biased composition (basic and acidic residues). Over residues 327 to 342 (QKTPTLPASGSNGQTS) the composition is skewed to polar residues. Composition is skewed to basic and acidic residues over residues 363 to 382 (SVEE…DKPS), 390 to 400 (PKPRNTEKDSA), and 425 to 439 (SEKD…KDSE). The span at 452-464 (AQQNATNPQTSSG) shows a compositional bias: polar residues.

Belongs to the opioid growth factor receptor family.

This Mus musculus (Mouse) protein is Opioid growth factor receptor-like protein 1 (Ogfrl1).